Reading from the N-terminus, the 328-residue chain is Cytochrome c biogenesis protein CcsA (328 aa).

Transmembrane regions (helical) follow at residues 13-33, 46-66, 73-93, 101-121, 146-166, 234-254, 263-283, and 295-315; these read ISFS…LVNL, GIII…IFSG, LYES…VSYF, LNAI…SGLL, MILG…LLVI, IISL…VWAN, WDPK…YLHI, and AIVA…VNLL.

The protein belongs to the CcmF/CycK/Ccl1/NrfE/CcsA family. In terms of assembly, may interact with Ccs1.

The protein localises to the plastid. It is found in the chloroplast thylakoid membrane. Its function is as follows. Required during biogenesis of c-type cytochromes (cytochrome c6 and cytochrome f) at the step of heme attachment. The chain is Cytochrome c biogenesis protein CcsA from Olimarabidopsis pumila (Dwarf rocket).